Reading from the N-terminus, the 475-residue chain is MESKALLVLTLAVWLQSLTASRGGVAAADQRRDFIDIESKFALRTPEDTAEDTCHLIPGVAESVATCHFNHSSKTFMVIHGWTVTGMYESWVPKLVAALYKREPDSNVIVVDWLSRAQEHYPVSAGYTKLVGQDVARFINWMEEEFNYPLDNVHLLGYSLGAHAAGIAGSLTNKKVNRITGLDPAGPNFEYAEAPSRLSPDDADFVDVLHTFTRGSPGRSIGIQKPVGHVDIYPNGGTFQPGCNIGEAIRVIAERGLGDVDQLVKCSHERSIHLFIDSLLNEENPSKAYRCSSKEAFEKGLCLSCRKNRCNNLGYEINKVRAKRSSKMYLKTRSQMPYKVFHYQVKIHFSGTESETHTNQAFEISLYGTVAESENIPFTLPEVSTNKTYSFLIYTEVDIGELLMLKLKWKSDSYFSWSDWWSSPGFAIQKIRVKAGETQKKVIFCSREKVSHLQKGKAPAVFVKCHDKSLNKKSG.

The N-terminal stretch at 1–27 (MESKALLVLTLAVWLQSLTASRGGVAA) is a signal peptide. Residues 32-53 (RDFIDIESKFALRTPEDTAEDT) are interaction with GPIHBP1. A disulfide bridge connects residues Cys-54 and Cys-67. The N-linked (GlcNAc...) asparagine glycan is linked to Asn-70. 3'-nitrotyrosine is present on Tyr-121. Catalysis depends on Ser-159, which acts as the Nucleophile. Residue Asp-183 is the Charge relay system of the active site. At Tyr-191 the chain carries 3'-nitrotyrosine. Residues Ala-194, Arg-197, Ser-199, and Asp-202 each contribute to the Ca(2+) site. Cys-243 and Cys-266 are oxidised to a cystine. The segment at 243–266 (CNIGEAIRVIAERGLGDVDQLVKC) is essential for determining substrate specificity. His-268 acts as the Charge relay system in catalysis. Disulfide bonds link Cys-291-Cys-310 and Cys-302-Cys-305. The PLAT domain occupies 341–464 (FHYQVKIHFS…KGKAPAVFVK (124 aa)). The residue at position 343 (Tyr-343) is a 3'-nitrotyrosine. An N-linked (GlcNAc...) asparagine glycan is attached at Asn-386. The tract at residues 417–421 (WSDWW) is important for interaction with lipoprotein particles. The tract at residues 430–434 (KIRVK) is important for heparin binding. Residues 443-467 (IFCSREKVSHLQKGKAPAVFVKCHD) form an interaction with GPIHBP1 region. The cysteines at positions 445 and 465 are disulfide-linked.

Belongs to the AB hydrolase superfamily. Lipase family. Homodimer. Interacts with GPIHBP1 with 1:1 stoichiometry. Interacts with APOC2; the interaction activates LPL activity in the presence of lipids. Interaction with heparan sulfate proteoglycans is required to protect LPL against loss of activity. Associates with lipoprotein particles in blood plasma. Interacts with LMF1 and SEL1L; interaction with SEL1L is required to prevent aggregation of newly synthesized LPL in the endoplasmic reticulum (ER), and for normal export of LPL from the ER to the extracellular space. Interacts with SORL1; SORL1 acts as a sorting receptor, promoting LPL localization to endosomes and later to lysosomes, leading to degradation of newly synthesized LPL. Tyrosine nitration after lipopolysaccharide (LPS) challenge down-regulates the lipase activity. As to expression, detected in blood plasma. Detected in milk (at protein level).

The protein resides in the cell membrane. It is found in the secreted. It localises to the extracellular space. Its subcellular location is the extracellular matrix. The catalysed reaction is a triacylglycerol + H2O = a diacylglycerol + a fatty acid + H(+). The enzyme catalyses a 1,2-diacyl-sn-glycero-3-phosphocholine + H2O = a 2-acyl-sn-glycero-3-phosphocholine + a fatty acid + H(+). It carries out the reaction 1,2,3-tri-(9Z-octadecenoyl)-glycerol + H2O = di-(9Z)-octadecenoylglycerol + (9Z)-octadecenoate + H(+). It catalyses the reaction 1,2-di-(9Z-octadecenoyl)-sn-glycero-3-phosphocholine + H2O = (9Z-octadecenoyl)-sn-glycero-3-phosphocholine + (9Z)-octadecenoate + H(+). The catalysed reaction is 1,2,3-tributanoylglycerol + H2O = dibutanoylglycerol + butanoate + H(+). The enzyme catalyses 1,2-dihexadecanoyl-sn-glycero-3-phosphocholine + H2O = hexadecanoyl-sn-glycero-3-phosphocholine + hexadecanoate + H(+). With respect to regulation, the apolipoprotein APOC2 acts as a coactivator of LPL activity. Ca(2+) binding promotes protein stability and formation of the active homodimer. Interaction with GPIHBP1 protects LPL against inactivation by ANGPTL4. Inhibited by NaCl. Its function is as follows. Key enzyme in triglyceride metabolism. Catalyzes the hydrolysis of triglycerides from circulating chylomicrons and very low density lipoproteins (VLDL), and thereby plays an important role in lipid clearance from the blood stream, lipid utilization and storage. Although it has both phospholipase and triglyceride lipase activities it is primarily a triglyceride lipase with low but detectable phospholipase activity. Mediates margination of triglyceride-rich lipoprotein particles in capillaries. Recruited to its site of action on the luminal surface of vascular endothelium by binding to GPIHBP1 and cell surface heparan sulfate proteoglycans. This is Lipoprotein lipase (LPL) from Homo sapiens (Human).